The sequence spans 305 residues: Sulfate adenylyltransferase subunit 2 (305 aa).

This sequence belongs to the PAPS reductase family. CysD subfamily. Heterodimer composed of CysD, the smaller subunit, and CysN.

The enzyme catalyses sulfate + ATP + H(+) = adenosine 5'-phosphosulfate + diphosphate. The protein operates within sulfur metabolism; hydrogen sulfide biosynthesis; sulfite from sulfate: step 1/3. In terms of biological role, with CysN forms the ATP sulfurylase (ATPS) that catalyzes the adenylation of sulfate producing adenosine 5'-phosphosulfate (APS) and diphosphate, the first enzymatic step in sulfur assimilation pathway. APS synthesis involves the formation of a high-energy phosphoric-sulfuric acid anhydride bond driven by GTP hydrolysis by CysN coupled to ATP hydrolysis by CysD. This chain is Sulfate adenylyltransferase subunit 2, found in Azotobacter vinelandii (strain DJ / ATCC BAA-1303).